The following is a 306-amino-acid chain: Curved DNA-binding protein (306 aa).

The J domain occupies Asp5–Trp69.

It is found in the cytoplasm. Its subcellular location is the nucleoid. Functionally, DNA-binding protein that preferentially recognizes a curved DNA sequence. It is probably a functional analog of DnaJ; displays overlapping activities with DnaJ, but functions under different conditions, probably acting as a molecular chaperone in an adaptive response to environmental stresses other than heat shock. Lacks autonomous chaperone activity; binds native substrates and targets them for recognition by DnaK. Its activity is inhibited by the binding of CbpM. This is Curved DNA-binding protein from Shigella boydii serotype 18 (strain CDC 3083-94 / BS512).